Consider the following 431-residue polypeptide: 3-phosphoshikimate 1-carboxyvinyltransferase (431 aa).

Residues K22, S23, and R27 each coordinate 3-phosphoshikimate. A phosphoenolpyruvate-binding site is contributed by K22. Residues G94 and R122 each contribute to the phosphoenolpyruvate site. Residues S168, S169, Q170, S196, D315, and K342 each coordinate 3-phosphoshikimate. A phosphoenolpyruvate-binding site is contributed by Q170. D315 acts as the Proton acceptor in catalysis. Phosphoenolpyruvate is bound by residues R346, R390, and K414.

The protein belongs to the EPSP synthase family. In terms of assembly, monomer.

Its subcellular location is the cytoplasm. It catalyses the reaction 3-phosphoshikimate + phosphoenolpyruvate = 5-O-(1-carboxyvinyl)-3-phosphoshikimate + phosphate. It functions in the pathway metabolic intermediate biosynthesis; chorismate biosynthesis; chorismate from D-erythrose 4-phosphate and phosphoenolpyruvate: step 6/7. Functionally, catalyzes the transfer of the enolpyruvyl moiety of phosphoenolpyruvate (PEP) to the 5-hydroxyl of shikimate-3-phosphate (S3P) to produce enolpyruvyl shikimate-3-phosphate and inorganic phosphate. The protein is 3-phosphoshikimate 1-carboxyvinyltransferase of Nitrosomonas europaea (strain ATCC 19718 / CIP 103999 / KCTC 2705 / NBRC 14298).